An 841-amino-acid chain; its full sequence is Probable outer membrane usher protein EcpC (841 aa).

Residues 1 to 29 form the signal peptide; the sequence is MPLRRFSPGLKAQFAFGMVFLFVQPDASA.

This sequence belongs to the EcpC/MatD family.

In terms of biological role, part of the ecpRABCDE operon, which encodes the E.coli common pilus (ECP). ECP is found in both commensal and pathogenic strains and plays a dual role in early-stage biofilm development and host cell recognition. The polypeptide is Probable outer membrane usher protein EcpC (ecpC) (Escherichia coli O18:K1:H7 (strain IHE3034 / ExPEC)).